We begin with the raw amino-acid sequence, 436 residues long: Acetylcholine receptor non-alpha chain (436 aa).

Residues 1-195 (IIDVHEIDQI…IFYLELRRKP (195 aa)) are Extracellular-facing. Asparagine 62 carries N-linked (GlcNAc...) asparagine glycosylation. Cysteine 89 and cysteine 103 are joined by a disulfide. N-linked (GlcNAc...) asparagine glycosylation occurs at asparagine 140. A run of 3 helical transmembrane segments spans residues 196 to 219 (LFYTVNLVFPCVGISFLTIVAFYL), 227 to 245 (VTLCILILVALTVFYLLLK), and 261 to 280 (YLLFTMIMVSLSVLVTVISL). Residues 281 to 404 (NLHFRRPSTH…WKFVARVLDR (124 aa)) lie on the Cytoplasmic side of the membrane. A helical transmembrane segment spans residues 405-423 (LFLLLFSIACFLGTILILF).

This sequence belongs to the ligand-gated ion channel (TC 1.A.9) family. Acetylcholine receptor (TC 1.A.9.1) subfamily.

The protein localises to the postsynaptic cell membrane. Its subcellular location is the cell membrane. After binding acetylcholine, the AChR responds by an extensive change in conformation that affects all subunits and leads to opening of an ion-conducting channel across the plasma membrane. The chain is Acetylcholine receptor non-alpha chain from Onchocerca volvulus.